A 346-amino-acid chain; its full sequence is MDDLIHSLKLIQIEKESILHRSESLDSSSTYTSSDTLSSREVSPISFLNETPSSFSLLSGFPRTSRENSVFKFPTTVVSLPENAESQQKACVHRIIEDSGYFFCDFCGKEFTGNISYEKTWDPTYASARVQRVKVEEGVRVNFFSIKEDLKFMGLNEDILFNIFEAYKKVTENGTKIHRSKLRKSILCACVKYIFDIRQIPCDENDLIRQFEIDKKDYSKGFKQLKMKVPETRSCQDDVLISLRNLFRKLDIDKQFFKTIECIYKTVKHTTLIKTNETFDEGPVFKDKNAKTIAAIVIYYWLENQQSNVIDINNFSVECLIPKYSLHKAYKECCPLISQIISFPLI.

The protein belongs to the IIV-6 359L family.

This is an uncharacterized protein from Invertebrate iridescent virus 6 (IIV-6).